The sequence spans 287 residues: Glycine--tRNA ligase alpha subunit (287 aa).

This sequence belongs to the class-II aminoacyl-tRNA synthetase family. In terms of assembly, tetramer of two alpha and two beta subunits.

The protein resides in the cytoplasm. The enzyme catalyses tRNA(Gly) + glycine + ATP = glycyl-tRNA(Gly) + AMP + diphosphate. The polypeptide is Glycine--tRNA ligase alpha subunit (Campylobacter jejuni subsp. jejuni serotype O:23/36 (strain 81-176)).